Reading from the N-terminus, the 362-residue chain is UDP-N-acetylglucosamine--N-acetylmuramyl-(pentapeptide) pyrophosphoryl-undecaprenol N-acetylglucosamine transferase (362 aa).

UDP-N-acetyl-alpha-D-glucosamine contacts are provided by residues 11-13 (TGG), Asn124, Arg163, Ser191, Ile246, and Gln291.

Belongs to the glycosyltransferase 28 family. MurG subfamily.

The protein resides in the cell inner membrane. The enzyme catalyses di-trans,octa-cis-undecaprenyl diphospho-N-acetyl-alpha-D-muramoyl-L-alanyl-D-glutamyl-meso-2,6-diaminopimeloyl-D-alanyl-D-alanine + UDP-N-acetyl-alpha-D-glucosamine = di-trans,octa-cis-undecaprenyl diphospho-[N-acetyl-alpha-D-glucosaminyl-(1-&gt;4)]-N-acetyl-alpha-D-muramoyl-L-alanyl-D-glutamyl-meso-2,6-diaminopimeloyl-D-alanyl-D-alanine + UDP + H(+). It functions in the pathway cell wall biogenesis; peptidoglycan biosynthesis. Cell wall formation. Catalyzes the transfer of a GlcNAc subunit on undecaprenyl-pyrophosphoryl-MurNAc-pentapeptide (lipid intermediate I) to form undecaprenyl-pyrophosphoryl-MurNAc-(pentapeptide)GlcNAc (lipid intermediate II). This is UDP-N-acetylglucosamine--N-acetylmuramyl-(pentapeptide) pyrophosphoryl-undecaprenol N-acetylglucosamine transferase from Idiomarina loihiensis (strain ATCC BAA-735 / DSM 15497 / L2-TR).